A 189-amino-acid polypeptide reads, in one-letter code: UPF0340 protein EF_1967 (189 aa).

This sequence belongs to the UPF0340 family.

In Enterococcus faecalis (strain ATCC 700802 / V583), this protein is UPF0340 protein EF_1967.